A 462-amino-acid polypeptide reads, in one-letter code: Microspherule protein 1 (462 aa).

M1 carries the post-translational modification N-acetylmethionine. The disordered stretch occupies residues 1-130; it reads MDKDSQGLLD…KSKQPLQVTK (130 aa). S22 carries the post-translational modification Phosphoserine. Over residues 43–55 the composition is skewed to basic residues; it reads PKRRSSSRFIKRK. Residues 81-90 are compositionally biased toward low complexity; sequence SGRCSGSEPS. S102 bears the Phosphoserine mark. The residue at position 103 (T103) is a Phosphothreonine. Pro residues predominate over residues 103–112; that stretch reads TPVPPSPAPT. S108 is modified (phosphoserine). A Nuclear localization signal motif is present at residues 113 to 123; sequence PGLTKRVKKSK. 2 positions are modified to N6-acetyllysine: K123 and K130. The residue at position 282 (S282) is a Phosphoserine. The stretch at 301–335 forms a coiled coil; sequence LEHELTVADRRQKREIRQLEQELHKWQVLVDSITG. The FHA domain maps to 363-419; the sequence is ITLGRATKDNQIDVDLSLEGPAWKISRKQGVIKLKNNGDFFIANEGRRPIYIDGRPV. A UBR5-degron motif is present at residues 389–396; it reads RKQGVIKL.

In terms of assembly, component of the chromatin remodeling INO80 complex; specifically part of a complex module associated with the N-terminus of INO80. Component of some MLL1/MLL complex, at least composed of the core components KMT2A/MLL1, ASH2L, HCFC1, WDR5 and RBBP5, as well as the facultative components BACC1, CHD8, E2F6, HSP70, INO80C, KANSL1, LAS1L, MAX, MCRS1, MGA, KAT8/MOF, PELP1, PHF20, PRP31, RING2, RUVB1/TIP49A, RUVB2/TIP49B, SENP3, TAF1, TAF4, TAF6, TAF7, TAF9 and TEX10. Component of the NSL complex at least composed of MOF/KAT8, KANSL1, KANSL2, KANSL3, MCRS1, PHF20, OGT1/OGT, WDR5 and HCFC1. Interacts with NOP2. Interacts with PINX1. Interacts with TERT. Interacts with CCDC85B. Interacts with DAXX. Interacts (via N-terminus) with FMR1 (via phosphorylated form). Interacts with FXR1 and FXR2. Interacts (via C-terminus) with NDE1 (via C-terminus); phosphorylation of NDE1 inhibits the interaction. Interacts (via C-terminus) with ZNF375. Interacts (via C-terminus) with active GTP-bound RHEB (via N-terminus) under conditions of high amino acid concentration; the interaction promotes mTORC1 complex activation by RHEB. Interacts (via N-terminus) with the mTORC1 complex; the interaction ensures mTORC1 activation by RHEB. Interacts with DYNC1I1; the interaction is required for the proper distribution of centriolar satellites. Interacts with TTBK2; the interaction is required for recruitment of TTBK2 to the mother centriole. Interacts with KIF2A; the interaction occurs during mitosis and facilitates chromosome alignment. Post-translationally, ubiquitinated by UBR5 when not assembled in the INO80 complex, leading to its degradation: UBR5 recognizes and binds a degron that is not accessible when MCRS1 is part of the INO80 complex. In terms of processing, phosphorylated by AURKA on Ser-35 and/or Ser-36 during mitosis which is required for kinetochore fiber assembly and mitotic progression but not for spindle localization or for chromosome-induced microtuble aster formation. Also phosphorylated by AURKA on Ser-85 and/or Ser-87. Phosphorylated by TTK/MPS1 which enhances recruitment of KIF2A to the minus end of spindle microtubules and facilitates precise chromosome segregation.

It is found in the nucleus. The protein localises to the nucleolus. It localises to the cytoplasm. Its subcellular location is the cytoskeleton. The protein resides in the microtubule organizing center. It is found in the centrosome. The protein localises to the spindle pole. It localises to the chromosome. Its subcellular location is the centromere. The protein resides in the kinetochore. It is found in the lysosome. The protein localises to the centriolar satellite. Functionally, modulates the transcription repressor activity of DAXX by recruiting it to the nucleolus. As part of the NSL complex it may be involved in acetylation of nucleosomal histone H4 on several lysine residues. Putative regulatory component of the chromatin remodeling INO80 complex which is involved in transcriptional regulation, DNA replication and probably DNA repair. May also be an inhibitor of TERT telomerase activity. Binds to G-quadruplex structures in mRNA. Binds to RNA homomer poly(G) and poly(U). Maintains RHEB at the lysosome in its active GTP-bound form and prevents its interaction with the mTORC1 complex inhibitor TSC2, ensuring activation of the mTORC1 complex by RHEB. Stabilizes the minus ends of kinetochore fibers by protecting them from depolymerization, ensuring functional spindle assembly during mitosis. Following phosphorylation by TTK/MPS1, enhances recruitment of KIF2A to the minus ends of mitotic spindle microtubules which promotes chromosome alignment. Regulates the morphology of microtubule minus ends in mitotic spindle by maintaining them in a closed conformation characterized by the presence of an electron-dense cap. Regulates G2/M transition and spindle assembly during oocyte meiosis. Mediates histone modifications and transcriptional regulation in germinal vesicle oocytes which are required for meiotic progression. Also regulates microtubule nucleation and spindle assembly by activating aurora kinases during oocyte meiosis. Contributes to the establishment of centriolar satellites and also plays a role in primary cilium formation by recruiting TTBK2 to the mother centriole which is necessary for removal of the CP110 cap from the mother centriole, an early step in ciliogenesis. Required for epiblast development during early embryogenesis. Essential for cell viability. The sequence is that of Microspherule protein 1 (Mcrs1) from Mus musculus (Mouse).